The chain runs to 249 residues: Serine acetyltransferase (249 aa).

This sequence belongs to the transferase hexapeptide repeat family.

The protein localises to the cytoplasm. The enzyme catalyses L-serine + acetyl-CoA = O-acetyl-L-serine + CoA. It functions in the pathway amino-acid biosynthesis; L-cysteine biosynthesis; L-cysteine from L-serine: step 1/2. The chain is Serine acetyltransferase (cysE) from Synechocystis sp. (strain ATCC 27184 / PCC 6803 / Kazusa).